The chain runs to 121 residues: MCRGLNNEESRRSDGGGCRSLCTRPSVPVRCELCDGDASVFCEADSAFLCRKCDRWVHGANFLAWRHVRRVLCTSCQKLTRRCLVGDHDFHVVLPSVTTVGETTVENRSEQDNHEVPFVFL.

The B box-type; atypical zinc-finger motif lies at 26 to 72 (SVPVRCELCDGDASVFCEADSAFLCRKCDRWVHGANFLAWRHVRRVL). The PFVFL signature appears at 117–121 (PFVFL).

In terms of tissue distribution, highly expressed in shoot apical meristems and in vascular tissues of leaves. Also detected in petioles.

Its function is as follows. Developmental regulator acting by forming heterodimeric complexes, that sequester CO and CO-like (COL) proteins into non-functional complexes. Involved in the CO-mediated long-day flowering-promotion pathway. Engages CO and the transcriptional repressor TPL in a tripartite complex. The protein is B-box domain protein 31 of Arabidopsis thaliana (Mouse-ear cress).